A 213-amino-acid chain; its full sequence is Oxidase ustYa (213 aa).

The interval 1 to 26 (MAERSSNGYKEVPVRQSEESTIAEEE) is disordered. Residues 48–68 (AVWFLIALLLLSNIGLLGGLI) traverse the membrane as a helical segment. A glycan (N-linked (GlcNAc...) asparagine) is linked at Asn98. 2 consecutive short sequence motifs (HXXHC) follow at residues 123–127 (HQLHC) and 150–154 (HLMHC).

This sequence belongs to the ustYa family.

The protein localises to the membrane. It functions in the pathway mycotoxin biosynthesis. Functionally, oxidase; part of the gene cluster that mediates the biosynthesis of the secondary metabolite ustiloxin B, an antimitotic tetrapeptide. First, ustA is processed by the subtilisin-like endoprotease Kex2 that is outside the ustiloxin B gene cluster, at the C-terminal side of Arg-Lys, after transfer to Golgi apparatus through the endoplasmic reticulum (ER). Cleavage by KEX2 generates 16 peptides YAIG-I to YAIG-XVI. To process the precursor peptide further, at least two peptidases are necessary to cleave the N-terminal and C-terminal sides of the Tyr-Ala-Ile-Gly core peptide which serves as backbone for the synthesis of ustiloxin B, through cyclization and modification of the tyrosine with a non-protein coding amino acid, norvaline. One of the two peptidases must be the serine peptidase ustP; and the other pepdidase is probably ustH. Macrocyclization of the core peptide derived from ustA requires the tyrosinase ustQ, as well as the homologous oxidases ustYa and ustYb, and leads to the production of the first cyclization product N-desmethylustiloxin F. For the formation of N-desmethylustiloxin F, three oxidation steps are required, hydroxylation at the benzylic position, hydroxylation at either the aromatic ring of Tyr or beta-position of Ile, and oxidative cyclization. UstQ may catalyze the oxidation of a phenol moiety, whereas the ustYa and ustYb are most likely responsible for the remaining two-step oxidations. N-desmethylustiloxin F is then methylated by ustM to yield ustiloxin F which in turn substrate of the cytochrome P450 monooxygenase ustC which catalyzes the formation of S-deoxyustiloxin H. The flavoprotein monooxygenases ustF1 and ustF2 then participate in the modification of the side chain of S-deoxyustiloxin H, leading to the synthesis of an oxime intermediate, via ustiloxin H. Finally, carboxylative dehydration performed by the cysteine desulfurase-like protein ustD yields ustiloxin B. In Aspergillus flavus (strain ATCC 200026 / FGSC A1120 / IAM 13836 / NRRL 3357 / JCM 12722 / SRRC 167), this protein is Oxidase ustYa.